A 186-amino-acid chain; its full sequence is Ribosome-recycling factor (186 aa).

Belongs to the RRF family.

The protein resides in the cytoplasm. Its function is as follows. Responsible for the release of ribosomes from messenger RNA at the termination of protein biosynthesis. May increase the efficiency of translation by recycling ribosomes from one round of translation to another. This is Ribosome-recycling factor from Nitratidesulfovibrio vulgaris (strain DP4) (Desulfovibrio vulgaris).